The primary structure comprises 247 residues: Carboxy-S-adenosyl-L-methionine synthase (247 aa).

Residues Y40, 65–67, 90–91, 122–123, N137, and R204 each bind S-adenosyl-L-methionine; these read GAS, DN, and DI.

The protein belongs to the class I-like SAM-binding methyltransferase superfamily. Cx-SAM synthase family. Homodimer.

It carries out the reaction prephenate + S-adenosyl-L-methionine = carboxy-S-adenosyl-L-methionine + 3-phenylpyruvate + H2O. Its function is as follows. Catalyzes the conversion of S-adenosyl-L-methionine (SAM) to carboxy-S-adenosyl-L-methionine (Cx-SAM). This chain is Carboxy-S-adenosyl-L-methionine synthase, found in Pseudomonas entomophila (strain L48).